A 443-amino-acid chain; its full sequence is PGPPPPAPEGRRRRGRGRNAAGQAVAAEASPAAVEMGNGAAAPGLQRPDAMGRFGRFGGKYVPETLMHALTELESAFHALATDDEFQKELDGILKDYVGRESPLYFAERLTEHYKRADGTGPLIYLKREDLNHTGAHKINNAVAQALLAKRLGKQRIIAETGAGQHGVATATVCRRFGLQCIIYMGAQDMERQALNVFRMRLLGAEVRAVHSGTATLKDATSEAIRDWVTNVETTHYILGSVAGPHPYPMMVREFHKVIGKETRRQAMDKWGGKPDVLVACVGGGSNAMGLFHEFVEDQDVRLVGLEAAGHGVDTDKHAATLTKGQVGVLHGSMSYLLQDDDGQVIEPHSISAGLDYPGVGPEHSFLKDIGRAEYDSVTDQEALDAFKRVSRLEGIIPALETSHALAYLEKLCPTLADGVRVVVNCSGRGDKDVHTASKYLDV.

The segment at 1–32 is disordered; sequence PGPPPPAPEGRRRRGRGRNAAGQAVAAEASPA. Residues 1 to 45 constitute a chloroplast transit peptide; sequence PGPPPPAPEGRRRRGRGRNAAGQAVAAEASPAAVEMGNGAAAPGL. Residues 18–32 are compositionally biased toward low complexity; it reads RNAAGQAVAAEASPA. K138 bears the N6-(pyridoxal phosphate)lysine mark.

The protein belongs to the TrpB family. In terms of assembly, tetramer of two alpha and two beta chains. Pyridoxal 5'-phosphate is required as a cofactor.

It localises to the plastid. The protein resides in the chloroplast. The enzyme catalyses (1S,2R)-1-C-(indol-3-yl)glycerol 3-phosphate + L-serine = D-glyceraldehyde 3-phosphate + L-tryptophan + H2O. It participates in amino-acid biosynthesis; L-tryptophan biosynthesis; L-tryptophan from chorismate: step 5/5. The beta subunit is responsible for the synthesis of L-tryptophan from indole and L-serine. The polypeptide is Tryptophan synthase beta chain 2, chloroplastic (TSB2) (Zea mays (Maize)).